We begin with the raw amino-acid sequence, 646 residues long: Serine/threonine-protein kinase PLK3 (646 aa).

Positions M1 to G35 are disordered. A compositionally biased stretch (low complexity) spans P10–A19. Residues P20 to S31 are compositionally biased toward pro residues. A Protein kinase domain is found at Y62–F314. ATP contacts are provided by residues L68–C76 and K91. Catalysis depends on D185, which acts as the Proton acceptor. The disordered stretch occupies residues G381–S417. 2 consecutive POLO box domains span residues W463–Q541 and L562–P645.

This sequence belongs to the protein kinase superfamily. Ser/Thr protein kinase family. CDC5/Polo subfamily. As to quaternary structure, interacts (via the POLO-box domain) with CIB1; leading to inhibit PLK3 kinase activity. Interacts with GOLGB1. In terms of processing, phosphorylated in an ATM-dependent manner following DNA damage. Phosphorylated as cells enter mitosis and dephosphorylated as cells exit mitosis. As to expression, transcripts are highly detected in placenta, lung, followed by skeletal muscle, heart, pancreas, ovaries and kidney and weakly detected in liver and brain. May have a short half-live. In cells of hematopoietic origin, strongly and exclusively detected in terminally differentiated macrophages. Transcript expression appears to be down-regulated in primary lung tumor.

The protein localises to the cytoplasm. Its subcellular location is the nucleus. The protein resides in the nucleolus. It is found in the golgi apparatus. It localises to the cytoskeleton. The protein localises to the microtubule organizing center. Its subcellular location is the centrosome. It catalyses the reaction L-seryl-[protein] + ATP = O-phospho-L-seryl-[protein] + ADP + H(+). The catalysed reaction is L-threonyl-[protein] + ATP = O-phospho-L-threonyl-[protein] + ADP + H(+). Functionally, serine/threonine-protein kinase involved in cell cycle regulation, response to stress and Golgi disassembly. Polo-like kinases act by binding and phosphorylating proteins that are already phosphorylated on a specific motif recognized by the POLO box domains. Phosphorylates ATF2, BCL2L1, CDC25A, CDC25C, CHEK2, HIF1A, JUN, p53/TP53, p73/TP73, PTEN, TOP2A and VRK1. Involved in cell cycle regulation: required for entry into S phase and cytokinesis. Phosphorylates BCL2L1, leading to regulate the G2 checkpoint and progression to cytokinesis during mitosis. Plays a key role in response to stress: rapidly activated upon stress stimulation, such as ionizing radiation, reactive oxygen species (ROS), hyperosmotic stress, UV irradiation and hypoxia. Involved in DNA damage response and G1/S transition checkpoint by phosphorylating CDC25A, p53/TP53 and p73/TP73. Phosphorylates p53/TP53 in response to reactive oxygen species (ROS), thereby promoting p53/TP53-mediated apoptosis. Phosphorylates CHEK2 in response to DNA damage, promoting the G2/M transition checkpoint. Phosphorylates the transcription factor p73/TP73 in response to DNA damage, leading to inhibit p73/TP73-mediated transcriptional activation and pro-apoptotic functions. Phosphorylates HIF1A and JUN is response to hypoxia. Phosphorylates ATF2 following hyperosmotic stress in corneal epithelium. Also involved in Golgi disassembly during the cell cycle: part of a MEK1/MAP2K1-dependent pathway that induces Golgi fragmentation during mitosis by mediating phosphorylation of VRK1. May participate in endomitotic cell cycle, a form of mitosis in which both karyokinesis and cytokinesis are interrupted and is a hallmark of megakaryocyte differentiation, via its interaction with CIB1. This chain is Serine/threonine-protein kinase PLK3 (PLK3), found in Homo sapiens (Human).